Reading from the N-terminus, the 365-residue chain is MKRPRPTSQPSISSTVKPPLSPPVTPILKQKLHRTGTPKWFPLKLTHTELTLPLTFPTGQTFRWKKTGAIQYSGTIGPHLVSLRQRPGDDAVSYCVHCSTSPKSAELALLDFLNAEISLAELWSDFSKKDPRFGELARHLRGARVLRQDPLECLIQFLCSSNNNIARITKMVDFVSSLGLHLGDIDGFEFHQFPSLDRLSRVSEEEFRKAGFGYRAKYITGTVNALQAKPGGGNEWLLSLRKVELQEAVAALCTLPGVGPKVAACIALFSLDQHSAIPVDTHVWQIATNYLLPDLAGAKLTPKLHGRVAEAFVSKYGEYAGWAQTLLFIAELPAQKTLLQSFSQPINKLDESAEVNETSCDTLKP.

Positions 1–16 (MKRPRPTSQPSISSTV) are enriched in polar residues. Positions 1–24 (MKRPRPTSQPSISSTVKPPLSPPV) are disordered. DNA-binding residues include N162, R167, and R215. The active-site Schiff-base intermediate with DNA is K261. 2 residues coordinate 8-oxoguanine: P278 and D280. H282 contacts DNA. The 8-oxoguanine site is built by Q324 and F328.

This sequence belongs to the type-1 OGG1 family. In terms of tissue distribution, expressed in stems, roots, rosette and cauline leaves, flowers and seeds.

It is found in the nucleus. It catalyses the reaction 2'-deoxyribonucleotide-(2'-deoxyribose 5'-phosphate)-2'-deoxyribonucleotide-DNA = a 3'-end 2'-deoxyribonucleotide-(2,3-dehydro-2,3-deoxyribose 5'-phosphate)-DNA + a 5'-end 5'-phospho-2'-deoxyribonucleoside-DNA + H(+). Its function is as follows. Involved in repair of DNA damaged by oxidation by incising DNA at 8-oxoG residues. Excises 7,8-dihydro-8-oxoguanine and 2,6-diamino-4-hydroxy-5-N-methylformamidopyrimidine (Fapy) from damaged DNA. Has a beta-lyase activity that nicks DNA 3' to the lesion. The polypeptide is N-glycosylase/DNA lyase OGG1 (OGG1) (Arabidopsis thaliana (Mouse-ear cress)).